A 730-amino-acid chain; its full sequence is Trimethylamine dehydrogenase (730 aa).

Pro29, Cys31, Tyr61, and Glu104 together coordinate FMN. Cys31 bears the S-6-FMN cysteine mark. 170 to 173 serves as a coordination point for substrate; it reads YGAH. Residue Tyr175 is the Proton donor of the active site. 5 residues coordinate FMN: Arg223, Asp268, Arg300, Ala322, and Arg323. Cys346, Cys349, Cys352, and Cys365 together coordinate [4Fe-4S] cluster. ADP is bound by residues Ser401, Asp420, Thr421, His428, Met471, and Asp675.

In the N-terminal section; belongs to the NADH:flavin oxidoreductase/NADH oxidase family. As to quaternary structure, homodimer. Forms a ternary complex with the heterodimeric electron transfer flavoprotein. FMN is required as a cofactor. The cofactor is [4Fe-4S] cluster.

The enzyme catalyses trimethylamine + oxidized [electron-transfer flavoprotein] + H2O + H(+) = dimethylamine + reduced [electron-transfer flavoprotein] + formaldehyde. The chain is Trimethylamine dehydrogenase from Methylophilus methylotrophus (Bacterium W3A1).